The sequence spans 158 residues: Coenzyme F420 hydrogenase subunit delta (158 aa).

It belongs to the peptidase A31 family.

The chain is Coenzyme F420 hydrogenase subunit delta (frhD) from Methanothermobacter thermautotrophicus (strain ATCC 29096 / DSM 1053 / JCM 10044 / NBRC 100330 / Delta H) (Methanobacterium thermoautotrophicum).